Reading from the N-terminus, the 180-residue chain is Large ribosomal subunit protein uL6 (180 aa).

It belongs to the universal ribosomal protein uL6 family. Part of the 50S ribosomal subunit.

In terms of biological role, this protein binds to the 23S rRNA, and is important in its secondary structure. It is located near the subunit interface in the base of the L7/L12 stalk, and near the tRNA binding site of the peptidyltransferase center. This Mesoplasma florum (strain ATCC 33453 / NBRC 100688 / NCTC 11704 / L1) (Acholeplasma florum) protein is Large ribosomal subunit protein uL6.